A 240-amino-acid chain; its full sequence is MAAIKDENNDHLVQSDNPEHPSNLIPALCRNFYSHGWVTGTGGGASIKRDNHIFIAPSGVQKELIQPHDIFVLQYPTPKYPPSARQYIRKPVELKPSACTPLFLAAFDRGAGCCIHTHSQWAVLVTLLVEREKGPEGCFEISNIEQIKGIPRGKGKGMLGFFDTLKIPIIENTAFEEDLTSSLEEAMEKYPDTYAVLVRRHGIYVWGDDVAKAKTQCESLDYLFQLAVEMHKLGLPWVKS.

Cysteine 99 is a substrate binding site. Histidine 116 and histidine 118 together coordinate Zn(2+). The active-site Proton donor/acceptor is glutamate 145. Residue histidine 201 coordinates Zn(2+).

It belongs to the aldolase class II family. MtnB subfamily. It depends on Zn(2+) as a cofactor.

The protein resides in the cytoplasm. The catalysed reaction is 5-(methylsulfanyl)-D-ribulose 1-phosphate = 5-methylsulfanyl-2,3-dioxopentyl phosphate + H2O. Its pathway is amino-acid biosynthesis; L-methionine biosynthesis via salvage pathway; L-methionine from S-methyl-5-thio-alpha-D-ribose 1-phosphate: step 2/6. Its function is as follows. Catalyzes the dehydration of methylthioribulose-1-phosphate (MTRu-1-P) into 2,3-diketo-5-methylthiopentyl-1-phosphate (DK-MTP-1-P). This is Methylthioribulose-1-phosphate dehydratase from Ajellomyces capsulatus (strain G186AR / H82 / ATCC MYA-2454 / RMSCC 2432) (Darling's disease fungus).